The sequence spans 220 residues: Protein GrpE (220 aa).

The interval 1–55 (MCGGDVQGQGVASGCDEALERADSLRASDPVPVESGEGSVPGEHSQELETGASEE) is disordered.

It belongs to the GrpE family. As to quaternary structure, homodimer.

The protein resides in the cytoplasm. In terms of biological role, participates actively in the response to hyperosmotic and heat shock by preventing the aggregation of stress-denatured proteins, in association with DnaK and GrpE. It is the nucleotide exchange factor for DnaK and may function as a thermosensor. Unfolded proteins bind initially to DnaJ; upon interaction with the DnaJ-bound protein, DnaK hydrolyzes its bound ATP, resulting in the formation of a stable complex. GrpE releases ADP from DnaK; ATP binding to DnaK triggers the release of the substrate protein, thus completing the reaction cycle. Several rounds of ATP-dependent interactions between DnaJ, DnaK and GrpE are required for fully efficient folding. This is Protein GrpE from Treponema pallidum (strain Nichols).